A 420-amino-acid polypeptide reads, in one-letter code: UDP-N-acetylglucosamine 1-carboxyvinyltransferase (420 aa).

Residue 22-23 coordinates phosphoenolpyruvate; sequence KN. Residue Arg94 participates in UDP-N-acetyl-alpha-D-glucosamine binding. Cys118 (proton donor) is an active-site residue. At Cys118 the chain carries 2-(S-cysteinyl)pyruvic acid O-phosphothioketal. Residues Asp306 and Ile328 each coordinate UDP-N-acetyl-alpha-D-glucosamine.

This sequence belongs to the EPSP synthase family. MurA subfamily.

It localises to the cytoplasm. It carries out the reaction phosphoenolpyruvate + UDP-N-acetyl-alpha-D-glucosamine = UDP-N-acetyl-3-O-(1-carboxyvinyl)-alpha-D-glucosamine + phosphate. The protein operates within cell wall biogenesis; peptidoglycan biosynthesis. In terms of biological role, cell wall formation. Adds enolpyruvyl to UDP-N-acetylglucosamine. The protein is UDP-N-acetylglucosamine 1-carboxyvinyltransferase of Jannaschia sp. (strain CCS1).